We begin with the raw amino-acid sequence, 140 residues long: Lysozyme B (140 aa).

An N-terminal signal peptide occupies residues 1 to 18 (MKAFIVLVALALAAPALG). One can recognise a C-type lysozyme domain in the interval 19 to 140 (RTMDRCSLAR…GWLPSIDDCF (122 aa)). Intrachain disulfides connect C24-C139, C45-C129, C80-C96, and C92-C110. Residues E50 and D68 contribute to the active site.

The protein belongs to the glycosyl hydrolase 22 family. As to expression, found in the midgut.

It carries out the reaction Hydrolysis of (1-&gt;4)-beta-linkages between N-acetylmuramic acid and N-acetyl-D-glucosamine residues in a peptidoglycan and between N-acetyl-D-glucosamine residues in chitodextrins.. Its function is as follows. Unlikely to play an active role in the humoral immune defense. May have a function in the digestion of bacteria in the food. The chain is Lysozyme B (LysB) from Drosophila melanogaster (Fruit fly).